Consider the following 50-residue polypeptide: Penaeidin-1 (50 aa).

3 disulfide bridges follow: Cys25–Cys38, Cys27–Cys45, and Cys39–Cys46.

Higher expression in hemocytes and to a lesser extent in heart, testis, gills, intestine, lymphoid organ and hepatopancreas. Traces in eyes and subcuticular epithelium. Not present in the brain.

The protein localises to the cytoplasmic granule. In terms of biological role, antibacterial activity against M.luteus and E.coli bacteria. Antifungal activity against N.crassa and F.oxysporum. Presents chitin-binding activity. The sequence is that of Penaeidin-1 from Penaeus vannamei (Whiteleg shrimp).